Consider the following 428-residue polypeptide: Adenylosuccinate synthetase (428 aa).

Residues 12-18 (GDEGKGK) and 40-42 (GHT) contribute to the GTP site. Asp13 functions as the Proton acceptor in the catalytic mechanism. Positions 13 and 40 each coordinate Mg(2+). Residues 13-16 (DEGK), 38-41 (NAGH), Thr130, Arg144, Gln224, Thr239, and Arg303 contribute to the IMP site. His41 (proton donor) is an active-site residue. 299–305 (VTTGRSR) serves as a coordination point for substrate. Residues Arg305, 331-333 (KID), and 413-415 (GVG) each bind GTP.

It belongs to the adenylosuccinate synthetase family. As to quaternary structure, homodimer. The cofactor is Mg(2+).

The protein localises to the cytoplasm. The enzyme catalyses IMP + L-aspartate + GTP = N(6)-(1,2-dicarboxyethyl)-AMP + GDP + phosphate + 2 H(+). Its pathway is purine metabolism; AMP biosynthesis via de novo pathway; AMP from IMP: step 1/2. Plays an important role in the de novo pathway of purine nucleotide biosynthesis. Catalyzes the first committed step in the biosynthesis of AMP from IMP. The protein is Adenylosuccinate synthetase of Clostridium perfringens (strain 13 / Type A).